Consider the following 993-residue polypeptide: Protein translocase subunit SecA (993 aa).

ATP-binding positions include Q102, 120–124 (GEGKT), and D523. The disordered stretch occupies residues 910-962 (ENAPEPQISGGNGQQPPQRRQQTSLDDLEKQFERKKKRELEQARMAGGGMPDA). The span at 936 to 951 (DLEKQFERKKKRELEQ) shows a compositional bias: basic and acidic residues. Positions 979, 981, 990, and 991 each coordinate Zn(2+).

Belongs to the SecA family. Monomer and homodimer. Part of the essential Sec protein translocation apparatus which comprises SecA, SecYEG and auxiliary proteins SecDF. Other proteins may also be involved. Zn(2+) is required as a cofactor.

Its subcellular location is the cell inner membrane. It is found in the cytoplasm. It carries out the reaction ATP + H2O + cellular proteinSide 1 = ADP + phosphate + cellular proteinSide 2.. In terms of biological role, part of the Sec protein translocase complex. Interacts with the SecYEG preprotein conducting channel. Has a central role in coupling the hydrolysis of ATP to the transfer of proteins into and across the cell membrane, serving as an ATP-driven molecular motor driving the stepwise translocation of polypeptide chains across the membrane. This chain is Protein translocase subunit SecA, found in Koribacter versatilis (strain Ellin345).